A 343-amino-acid polypeptide reads, in one-letter code: Glucokinase (343 aa).

21-26 is an ATP binding site; that stretch reads ADVGGT.

It belongs to the bacterial glucokinase family.

It localises to the cytoplasm. The catalysed reaction is D-glucose + ATP = D-glucose 6-phosphate + ADP + H(+). The protein is Glucokinase of Cupriavidus pinatubonensis (strain JMP 134 / LMG 1197) (Cupriavidus necator (strain JMP 134)).